A 315-amino-acid chain; its full sequence is Taste receptor type 2 member 3 (315 aa).

Over 1–5 the chain is Extracellular; the sequence is MGLTE. The helical transmembrane segment at 6-26 threads the bilayer; sequence GLFLILSGTQFALGILVNCFI. At 27–41 the chain is on the cytoplasmic side; sequence GLVNGSSWFKTKRMS. Residues 42–62 traverse the membrane as a helical segment; it reads LSDFIITTLAFLRIILLCIIL. The Extracellular segment spans residues 63–93; the sequence is TDSFLIEFSPNAHDSGVIMQIIDVSWTFTNH. The chain crosses the membrane as a helical span at residues 94-114; sequence LSIWLATCLGVLYCLKIASFS. The Cytoplasmic portion of the chain corresponds to 115–127; sequence HPTFLWLKWRVSR. Residues 128–148 form a helical membrane-spanning segment; it reads VMVWMLLGVLLLSCGSTASLI. Residues 149–185 are Extracellular-facing; it reads NEFKLYSVFRGIEATXNVTEHFRKKRSEYYLIHVLGT. Asn-165 carries N-linked (GlcNAc...) asparagine glycosylation. A helical membrane pass occupies residues 186-206; sequence LWYLPPLIVSLAAYFLLIFSL. At 207–233 the chain is on the cytoplasmic side; it reads GRHTRQMLQNGTSSRDPSTEAHKRAIR. Residues 234-254 traverse the membrane as a helical segment; the sequence is IILSSFFLFLLYFLAFLIASF. Topologically, residues 255-265 are extracellular; the sequence is GNFLPKTKMAK. Residues 266–286 form a helical membrane-spanning segment; it reads MIGEVMTMFYPAGHSFILILG. At 287–315 the chain is on the cytoplasmic side; it reads NSKLKQTFVEMLRCESGHLKPGSKGPIFS.

Belongs to the G-protein coupled receptor T2R family.

It is found in the membrane. In terms of biological role, gustducin-coupled receptor implicated in the perception of bitter compounds in the oral cavity and the gastrointestinal tract. Signals through PLCB2 and the calcium-regulated cation channel TRPM5. This Pongo pygmaeus (Bornean orangutan) protein is Taste receptor type 2 member 3 (TAS2R3).